We begin with the raw amino-acid sequence, 145 residues long: Halilectin 3, alpha chain (145 aa).

An N-linked (GlcNAc...) asparagine glycan is attached at N73.

Probable heterotrimer consisting of an alpha chain and two beta chains. The alpha chain can probably have different glycosylation states. In terms of processing, glycosylated.

Functionally, lectin with affinity for N-acetyl-galactosamine, carragenan and glycoprotein porcine stomach mucin (PSM). Has metal-independent hemagglutinating activity towards erythrocytes from rabbit and human. Hemagglutinating activity is not inhibited by D-galactose, D-glucose, D-mannose, D-fucose, methyl-alpha-D-galactopyranoside, methyl-alpha-D-glucopyranoside, N-acetyl-glucosamine, N-acetyl-mannosamine, D-fructose, alpha-D-lactose, beta-D-lactose, D-lactulose, D-sucrose, fucoidan or glycoproteins thyroglobulin and ovalmucoid. In Haliclona caerulea (Blue Caribbean sponge), this protein is Halilectin 3, alpha chain.